A 55-amino-acid chain; its full sequence is Large ribosomal subunit protein bL33 (55 aa).

Belongs to the bacterial ribosomal protein bL33 family.

In Sinorhizobium fredii (strain NBRC 101917 / NGR234), this protein is Large ribosomal subunit protein bL33.